Reading from the N-terminus, the 316-residue chain is Ribosomal RNA small subunit methyltransferase H (316 aa).

S-adenosyl-L-methionine is bound by residues 35–37 (AGH), Asp-55, Phe-84, Asp-105, and Gln-112.

This sequence belongs to the methyltransferase superfamily. RsmH family.

The protein resides in the cytoplasm. The catalysed reaction is cytidine(1402) in 16S rRNA + S-adenosyl-L-methionine = N(4)-methylcytidine(1402) in 16S rRNA + S-adenosyl-L-homocysteine + H(+). Specifically methylates the N4 position of cytidine in position 1402 (C1402) of 16S rRNA. In Streptococcus mutans serotype c (strain ATCC 700610 / UA159), this protein is Ribosomal RNA small subunit methyltransferase H.